The chain runs to 269 residues: Phosphate import ATP-binding protein PstB (269 aa).

Residues 21–264 (SEVRNLSFYY…PKNKQTEDYI (244 aa)) enclose the ABC transporter domain. 53 to 60 (GPSGCGKS) is a binding site for ATP.

The protein belongs to the ABC transporter superfamily. Phosphate importer (TC 3.A.1.7) family. As to quaternary structure, the complex is composed of two ATP-binding proteins (PstB), two transmembrane proteins (PstC and PstA) and a solute-binding protein (PstS).

The protein resides in the cell inner membrane. It carries out the reaction phosphate(out) + ATP + H2O = ADP + 2 phosphate(in) + H(+). Part of the ABC transporter complex PstSACB involved in phosphate import. Responsible for energy coupling to the transport system. The polypeptide is Phosphate import ATP-binding protein PstB (Nitrosospira multiformis (strain ATCC 25196 / NCIMB 11849 / C 71)).